The primary structure comprises 416 residues: Enterobactin exporter EntS (416 aa).

The Cytoplasmic portion of the chain corresponds to 1–21; that stretch reads MNKQSWLLNLSLLKTHPAFRA. The helical transmembrane segment at 22–42 threads the bilayer; the sequence is VFLARFISIVSLGLLGVAVPV. Topologically, residues 43–55 are periplasmic; the sequence is QIQMMTHSTWQVG. A helical transmembrane segment spans residues 56 to 76; it reads LSVTLTGGAMFVGLMVGGVLA. The Cytoplasmic portion of the chain corresponds to 77 to 83; that stretch reads DRYERKK. Residues 84–104 form a helical membrane-spanning segment; the sequence is VILLARGTCGIGFIGLCLNAL. The Periplasmic segment spans residues 105 to 109; it reads LPEPS. The chain crosses the membrane as a helical span at residues 110–130; the sequence is LLAIYLLGLWDGFFASLGVTA. Residues 131-156 lie on the Cytoplasmic side of the membrane; it reads LLAATPALVGRENLMQAGAITMLTVR. The helical transmembrane segment at 157–177 threads the bilayer; that stretch reads LGSVISPMIGGLLLATGGVAW. Residue N178 is a topological domain, periplasmic. Residues 179–199 traverse the membrane as a helical segment; the sequence is YGLAAAGTFITLLPLLSLPAL. The Cytoplasmic segment spans residues 200–218; the sequence is PPPPQPREHPLKSLLAGFR. A helical membrane pass occupies residues 219–239; sequence FLLASPLVGGIALLGGLLTMA. The Periplasmic portion of the chain corresponds to 240 to 256; sequence SAVRVLYPALADNWQMS. Residues 257 to 277 traverse the membrane as a helical segment; it reads AAQIGFLYAAIPLGAAIGALT. At 278–287 the chain is on the cytoplasmic side; it reads SGKLAHSARP. The helical transmembrane segment at 288–307 threads the bilayer; sequence GLLMLLSTLGSFLAIGLFGL. The Periplasmic portion of the chain corresponds to 308–313; the sequence is MPMWIL. A helical membrane pass occupies residues 314–336; sequence GVVCLALFGWLSAVSSLLQYTML. Over 337–356 the chain is Cytoplasmic; it reads QTQTPEAMLGRINGLWTAQN. A helical membrane pass occupies residues 357-377; that stretch reads VTGDAIGAALLGGLGAMMTPV. A topological domain (periplasmic) is located at residue A378. The helical transmembrane segment at 379–399 threads the bilayer; it reads SASASGFGLLIIGVLLLLVLV. Over 400–416 the chain is Cytoplasmic; it reads ELRRFRQTPPQMTASDS.

The protein belongs to the major facilitator superfamily. EntS (TC 2.A.1.38) family.

The protein localises to the cell inner membrane. Its function is as follows. Component of an export pathway for enterobactin. The sequence is that of Enterobactin exporter EntS from Escherichia coli O7:K1 (strain IAI39 / ExPEC).